Here is a 187-residue protein sequence, read N- to C-terminus: Peptidyl-tRNA hydrolase (187 aa).

Y18 lines the tRNA pocket. H23 acts as the Proton acceptor in catalysis. Residues F65, N67, and N113 each coordinate tRNA.

This sequence belongs to the PTH family. In terms of assembly, monomer.

Its subcellular location is the cytoplasm. It carries out the reaction an N-acyl-L-alpha-aminoacyl-tRNA + H2O = an N-acyl-L-amino acid + a tRNA + H(+). Its function is as follows. Hydrolyzes ribosome-free peptidyl-tRNAs (with 1 or more amino acids incorporated), which drop off the ribosome during protein synthesis, or as a result of ribosome stalling. Catalyzes the release of premature peptidyl moieties from peptidyl-tRNA molecules trapped in stalled 50S ribosomal subunits, and thus maintains levels of free tRNAs and 50S ribosomes. This chain is Peptidyl-tRNA hydrolase, found in Coxiella burnetii (strain RSA 331 / Henzerling II).